The sequence spans 154 residues: Ascorbate-specific PTS system EIIA component (154 aa).

Positions 6–150 (SLAENKSIRL…QEVLDLIDRT (145 aa)) constitute a PTS EIIA type-2 domain. Histidine 68 functions as the Tele-phosphohistidine intermediate in the catalytic mechanism. Position 68 is a phosphohistidine (histidine 68).

It localises to the cytoplasm. Functionally, the phosphoenolpyruvate-dependent sugar phosphotransferase system (sugar PTS), a major carbohydrate active transport system, catalyzes the phosphorylation of incoming sugar substrates concomitantly with their translocation across the cell membrane. The enzyme II UlaABC PTS system is involved in ascorbate transport. The protein is Ascorbate-specific PTS system EIIA component (ulaC) of Escherichia coli O157:H7.